Here is a 970-residue protein sequence, read N- to C-terminus: Protein tweety (970 aa).

Residues 1-47 (MGDYHEFTDQYKVPVIAKLLHALPHYNITFHKINSTFRPNDEIYLES) lie on the Extracellular side of the membrane. 2 N-linked (GlcNAc...) asparagine glycosylation sites follow: Asn-27 and Asn-34. The chain crosses the membrane as a helical span at residues 48-68 (LGILGSVPAALLIVSLLGLLF). At 69–89 (YLMTRCCDRKPRPAHSITSLK) the chain is on the cytoplasmic side. The chain crosses the membrane as a helical span at residues 90–110 (VALSIVTVMCCAAIGLGLYGN). At 111–219 (DDLHNGLLEV…GDQWELIRWP (109 aa)) the chain is on the extracellular side. 3 N-linked (GlcNAc...) asparagine glycosylation sites follow: Asn-136, Asn-166, and Asn-183. The chain crosses the membrane as a helical span at residues 220–240 (GTVATLALLLVLCAVLLVGVA). Residues 241-246 (RHSRCA) are Cytoplasmic-facing. Residues 247 to 267 (LILFSVCGLLAVTGSWLMSGL) traverse the membrane as a helical segment. Over 268–395 (YLSSSVAVGD…RGLCEGGLLG (128 aa)) the chain is Extracellular. Asn-359 carries an N-linked (GlcNAc...) asparagine glycan. The chain crosses the membrane as a helical span at residues 396 to 416 (LVLMLIASFIAAILLTIMVWV). Residues 417-970 (DSHTWIYIRK…DESNYAVTEL (554 aa)) are Cytoplasmic-facing. Positions 532–571 (NAAANMPPTTQAAQQQQQQQAQQQQQQAQQQLGGPQPIYC) are enriched in low complexity. Disordered regions lie at residues 532 to 587 (NAAA…QHPH), 677 to 763 (RQNS…NESD), and 849 to 970 (MKAI…VTEL). Residues 572–587 (HHPHQHPHPHPHQHPH) are compositionally biased toward basic residues. Composition is skewed to low complexity over residues 689-700 (HQHPPSLHQQQQ), 707-737 (QQQQ…QQHH), and 745-759 (QHQQ…QQQP). Residues 852 to 868 (IPPPRIGTPTSPPPPVA) are compositionally biased toward pro residues. 2 stretches are compositionally biased toward gly residues: residues 883–894 (QNGGAVVGGGGA) and 931–945 (NGGG…GGGA). The span at 961-970 (DESNYAVTEL) shows a compositional bias: polar residues.

Belongs to the tweety family.

The protein resides in the cell membrane. Non-essential protein that probably acts as a chloride channel. The polypeptide is Protein tweety (tty) (Drosophila melanogaster (Fruit fly)).